A 490-amino-acid polypeptide reads, in one-letter code: UDP-N-acetylmuramoyl-L-alanyl-D-glutamate--2,6-diaminopimelate ligase (490 aa).

Ser31 lines the UDP-N-acetyl-alpha-D-muramoyl-L-alanyl-D-glutamate pocket. 109-115 (GTNGKTS) is an ATP binding site. UDP-N-acetyl-alpha-D-muramoyl-L-alanyl-D-glutamate is bound by residues Asn150, 151–152 (TT), Ser178, and Arg186. Lys218 carries the N6-carboxylysine modification. Meso-2,6-diaminopimelate-binding positions include Arg384, 408-411 (DNPR), Gly458, and Glu462. The short motif at 408-411 (DNPR) is the Meso-diaminopimelate recognition motif element.

This sequence belongs to the MurCDEF family. MurE subfamily. It depends on Mg(2+) as a cofactor. Carboxylation is probably crucial for Mg(2+) binding and, consequently, for the gamma-phosphate positioning of ATP.

It localises to the cytoplasm. It catalyses the reaction UDP-N-acetyl-alpha-D-muramoyl-L-alanyl-D-glutamate + meso-2,6-diaminopimelate + ATP = UDP-N-acetyl-alpha-D-muramoyl-L-alanyl-gamma-D-glutamyl-meso-2,6-diaminopimelate + ADP + phosphate + H(+). It participates in cell wall biogenesis; peptidoglycan biosynthesis. Functionally, catalyzes the addition of meso-diaminopimelic acid to the nucleotide precursor UDP-N-acetylmuramoyl-L-alanyl-D-glutamate (UMAG) in the biosynthesis of bacterial cell-wall peptidoglycan. The chain is UDP-N-acetylmuramoyl-L-alanyl-D-glutamate--2,6-diaminopimelate ligase from Bacillus velezensis (strain DSM 23117 / BGSC 10A6 / LMG 26770 / FZB42) (Bacillus amyloliquefaciens subsp. plantarum).